A 654-amino-acid chain; its full sequence is Integrator complex subunit 9 (654 aa).

1D-myo-inositol hexakisphosphate is bound by residues Met-1, Arg-2, Thr-18, Phe-19, Arg-504, Lys-508, and Arg-509.

Belongs to the metallo-beta-lactamase superfamily. RNA-metabolizing metallo-beta-lactamase-like family. INTS9 subfamily. As to quaternary structure, belongs to the multiprotein complex Integrator, at least composed of IntS1, IntS2, IntS3, IntS4, omd/IntS5, IntS6, defl/IntS7, IntS8, IntS9, IntS10, IntS11, IntS12, asun/IntS13, IntS14 and IntS15. The core complex associates with protein phosphatase 2A subunits mts/PP2A and Pp2A-29B, to form the Integrator-PP2A (INTAC) complex. Within the complex, interacts with IntS1 and IntS12. IntS9 is part of the RNA endonuclease subcomplex, composed of IntS4, IntS9, IntS11 and inositol hexakisphosphate (InsP6).

It is found in the nucleus. The protein localises to the cytoplasm. The protein resides in the cytosol. Its function is as follows. Component of the integrator complex, a multiprotein complex that terminates RNA polymerase II (Pol II) transcription in the promoter-proximal region of genes. The integrator complex provides a quality checkpoint during transcription elongation by driving premature transcription termination of transcripts that are unfavorably configured for transcriptional elongation: the complex terminates transcription by (1) catalyzing dephosphorylation of the C-terminal domain (CTD) of Pol II subunit Polr2A/Rbp1 and Spt5, and (2) degrading the exiting nascent RNA transcript via endonuclease activity. The integrator complex is also involved in the 3'-end processing of the U7 snRNA, and also the spliceosomal snRNAs U1, U2, U4 and U5. This is Integrator complex subunit 9 from Drosophila melanogaster (Fruit fly).